The primary structure comprises 332 residues: Glycerol-3-phosphate dehydrogenase [NAD(P)+] (332 aa).

Positions 11, 12, 32, and 106 each coordinate NADPH. Residues K106, G137, and S139 each coordinate sn-glycerol 3-phosphate. Residue A141 participates in NADPH binding. K192, D245, S255, R256, and N257 together coordinate sn-glycerol 3-phosphate. The active-site Proton acceptor is the K192. R256 contributes to the NADPH binding site. Residues V280 and E282 each coordinate NADPH.

The protein belongs to the NAD-dependent glycerol-3-phosphate dehydrogenase family.

It is found in the cytoplasm. The enzyme catalyses sn-glycerol 3-phosphate + NAD(+) = dihydroxyacetone phosphate + NADH + H(+). It carries out the reaction sn-glycerol 3-phosphate + NADP(+) = dihydroxyacetone phosphate + NADPH + H(+). The protein operates within membrane lipid metabolism; glycerophospholipid metabolism. Catalyzes the reduction of the glycolytic intermediate dihydroxyacetone phosphate (DHAP) to sn-glycerol 3-phosphate (G3P), the key precursor for phospholipid synthesis. The chain is Glycerol-3-phosphate dehydrogenase [NAD(P)+] from Staphylococcus carnosus (strain TM300).